A 170-amino-acid polypeptide reads, in one-letter code: uncharacterized protein (170 aa).

Helical transmembrane passes span 21-41, 55-75, 86-106, 117-137, and 143-163; these read NISL…AAVL, AYTS…TLLL, TGIA…YWLW, ISGV…VSLL, and FSAA…TLLP. Residues 35–161 enclose the EamA domain; that stretch reads IIFAAVLRWT…IMLATLGSTL (127 aa).

The protein belongs to the EamA transporter family.

Its subcellular location is the cell membrane. This is an uncharacterized protein from Haemophilus influenzae (strain ATCC 51907 / DSM 11121 / KW20 / Rd).